We begin with the raw amino-acid sequence, 303 residues long: 1D-myo-inositol 2-acetamido-2-deoxy-alpha-D-glucopyranoside deacetylase (303 aa).

Zn(2+)-binding residues include histidine 15, aspartate 18, and histidine 157.

Belongs to the MshB deacetylase family. Zn(2+) is required as a cofactor.

The catalysed reaction is 1D-myo-inositol 2-acetamido-2-deoxy-alpha-D-glucopyranoside + H2O = 1D-myo-inositol 2-amino-2-deoxy-alpha-D-glucopyranoside + acetate. Catalyzes the deacetylation of 1D-myo-inositol 2-acetamido-2-deoxy-alpha-D-glucopyranoside (GlcNAc-Ins) in the mycothiol biosynthesis pathway. This Kribbella flavida (strain DSM 17836 / JCM 10339 / NBRC 14399) protein is 1D-myo-inositol 2-acetamido-2-deoxy-alpha-D-glucopyranoside deacetylase.